The chain runs to 379 residues: MHYKLLFAAAAASLASAVSAAGVVGAAEGFAHGVTGGGSASPVYPTTTDELVSYLGDNEPRVIILDRTFDFTGTEGTETTTGCAPWGTASQCQVAINLHSWCDNYQASAPKVSVTYDKAGILPITVNSNKSIVGQGTKGVIKGKGLRVVSGAKNVIIQNIAVTDINPKYVWGGDAITVDDSDLVWIDHVTTARIGRQHIVLGTSADNRVTISYSLIDGRSDYSATCNGHHYWGVYLDGSNDMVTLKGNYFYNLSGRMPKVQGNTLLHAVNNLFHNFDGHAFEIGTGGYVLAEGNVFQDVNTVVETPISGQLFSSPDANTNQQCASVFGRSCQLNAFGNSGSMSGSDTSIISKFAGKTIAAAHPPGNIAQWTMKNAGQGK.

Residues 1 to 20 form the signal peptide; it reads MHYKLLFAAAAASLASAVSA. Intrachain disulfides connect Cys83–Cys102 and Cys92–Cys226. Residues Asn129 and Asn252 are each glycosylated (N-linked (GlcNAc...) asparagine). Arg256 is a catalytic residue. A disulfide bond links Cys323 and Cys331.

This sequence belongs to the polysaccharide lyase 1 family.

It localises to the secreted. It carries out the reaction Eliminative cleavage of (1-&gt;4)-alpha-D-galacturonan methyl ester to give oligosaccharides with 4-deoxy-6-O-methyl-alpha-D-galact-4-enuronosyl groups at their non-reducing ends.. Its function is as follows. Pectinolytic enzymes consist of four classes of enzymes: pectin lyase, polygalacturonase, pectin methylesterase and rhamnogalacturonase. Among pectinolytic enzymes, pectin lyase is the most important in depolymerization of pectin, since it cleaves internal glycosidic bonds of highly methylated pectins. This is Probable pectin lyase B (pelB) from Aspergillus niger (strain ATCC MYA-4892 / CBS 513.88 / FGSC A1513).